Here is a 386-residue protein sequence, read N- to C-terminus: Galactokinase (386 aa).

35–38 (EHTD) is a substrate binding site. Residues serine 69 and 125-131 (GAGLSSS) contribute to the ATP site. Positions 131 and 163 each coordinate Mg(2+). Aspartate 175 (proton acceptor) is an active-site residue. Tyrosine 224 serves as a coordination point for substrate.

Belongs to the GHMP kinase family. GalK subfamily.

The protein localises to the cytoplasm. The catalysed reaction is alpha-D-galactose + ATP = alpha-D-galactose 1-phosphate + ADP + H(+). The protein operates within carbohydrate metabolism; galactose metabolism. In terms of biological role, catalyzes the transfer of the gamma-phosphate of ATP to D-galactose to form alpha-D-galactose-1-phosphate (Gal-1-P). The polypeptide is Galactokinase (Vibrio vulnificus (strain CMCP6)).